The following is a 207-amino-acid chain: LexA repressor (207 aa).

Positions R28–K48 form a DNA-binding region, H-T-H motif. Catalysis depends on for autocatalytic cleavage activity residues S126 and K163.

The protein belongs to the peptidase S24 family. In terms of assembly, homodimer.

It catalyses the reaction Hydrolysis of Ala-|-Gly bond in repressor LexA.. Its function is as follows. Represses a number of genes involved in the response to DNA damage (SOS response), including recA and lexA. In the presence of single-stranded DNA, RecA interacts with LexA causing an autocatalytic cleavage which disrupts the DNA-binding part of LexA, leading to derepression of the SOS regulon and eventually DNA repair. The protein is LexA repressor of Marinomonas sp. (strain MWYL1).